A 433-amino-acid polypeptide reads, in one-letter code: Trigger factor (433 aa).

The region spanning 163–248 (GDVVVLDFAA…VHAVKERRLP (86 aa)) is the PPIase FKBP-type domain.

Belongs to the FKBP-type PPIase family. Tig subfamily.

It localises to the cytoplasm. It catalyses the reaction [protein]-peptidylproline (omega=180) = [protein]-peptidylproline (omega=0). Involved in protein export. Acts as a chaperone by maintaining the newly synthesized protein in an open conformation. Functions as a peptidyl-prolyl cis-trans isomerase. The chain is Trigger factor from Nitratidesulfovibrio vulgaris (strain DP4) (Desulfovibrio vulgaris).